Here is a 543-residue protein sequence, read N- to C-terminus: Kelch repeat and BTB domain-containing protein 4 (543 aa).

A BTB domain is found at 70-137 (ADVTISVEGR…IYHGTVKLRA (68 aa)). Residues 172 to 264 (CLQVMWLADR…SLKEIGENVH (93 aa)) form the BACK domain. Kelch repeat units lie at residues 264–310 (HIYL…KHGG), 311–353 (DLYV…SVPG), 356–403 (AIYS…NLNG), 405–455 (IYLL…VHKD), and 457–505 (VFIV…YVFR).

As to quaternary structure, component of the BCR(KBTBD4) E3 ubiquitin ligase complex, at least composed of CUL3, KBTBD4 and RBX1.

Functionally, substrate-specific adapter of a BCR (BTB-CUL3-RBX1) E3 ubiquitin ligase complex which targets CoREST corepressor complex components RCOR1, KDM1A/LSD1 and HDAC2 for proteasomal degradation. RCOR1 is likely to be the primary target while degradation of KDM1A and HDAC2 is likely due to their association with RCOR1. Also targets RCOR3, MIER2 and MIER3 for proteasomal degradation as well as associated proteins ZNF217 and RREB1. Degradation is dependent on the presence of an ELM2 domain in the target proteins. This Macaca fascicularis (Crab-eating macaque) protein is Kelch repeat and BTB domain-containing protein 4 (KBTBD4).